The chain runs to 119 residues: Holo-[acyl-carrier-protein] synthase (119 aa).

D8 and E53 together coordinate Mg(2+).

It belongs to the P-Pant transferase superfamily. AcpS family. Mg(2+) serves as cofactor.

It localises to the cytoplasm. The catalysed reaction is apo-[ACP] + CoA = holo-[ACP] + adenosine 3',5'-bisphosphate + H(+). Its function is as follows. Transfers the 4'-phosphopantetheine moiety from coenzyme A to a Ser of acyl-carrier-protein. The protein is Holo-[acyl-carrier-protein] synthase of Petrotoga mobilis (strain DSM 10674 / SJ95).